The following is a 126-amino-acid chain: Probable V-type proton ATPase subunit G (126 aa).

Belongs to the V-ATPase G subunit family. As to quaternary structure, V-ATPase is a heteromultimeric enzyme made up of two complexes: the ATP-hydrolytic V1 complex and the proton translocation V0 complex. The V1 complex consists of three catalytic AB heterodimers that form a heterohexamer, three peripheral stalks each consisting of EG heterodimers, one central rotor including subunits D and F, and the regulatory subunits C and H. The proton translocation complex V0 consists of the proton transport subunit a, a ring of proteolipid subunits c9c'', rotary subunit d, subunits e and f, and the accessory subunits vah-19/Ac45 and vah-20/PRR. Interacts with ced-1.

Functionally, subunit of the V1 complex of vacuolar(H+)-ATPase (V-ATPase), a multisubunit enzyme composed of a peripheral complex (V1) that hydrolyzes ATP and a membrane integral complex (V0) that translocates protons. V-ATPase is responsible for acidifying and maintaining the pH of intracellular compartments and in some cell types, is targeted to the plasma membrane, where it is responsible for acidifying the extracellular environment. In neurons, required for necrotic cell death by promoting intracellular acidification. This Caenorhabditis elegans protein is Probable V-type proton ATPase subunit G.